A 386-amino-acid chain; its full sequence is MFEPMELTNDAVIKVIGVGGGGGNAVEHMVRERIEGVDFFAVNTDAQALRKTAVGQTIQIGSGITKGLGAGANPEVGRHSAEEDREALRAALEGADMVFIAAGMGGGTGTGAAPVVAEVAKDQGILTVAVVAKPFNFEGKKRMAFAEQGIAELSKHVDSLITIPNDKLLKVLGRGISLLDAFGAANDVLKGAVQGIAELITRPGLMNVDFADVRTVMSEMGYAMMGSGVACGEDRAEEAAEMAISSPLLEDIDLSGARGVLVNITAGFDLRLDEFETVGNTIRAFASDNATVVIGTSLDPDMNDELRVTVVATGIGMDKRPEITLVTNKQSSQRVMDNLYRDHAAGMSSLNQEQKTAAKAVNEQNAQGSKEPDYLDIPAFLRKQAD.

Residues 20-24 (GGGGN), 107-109 (GTG), Glu-138, Arg-142, and Asn-186 each bind GTP. Residues 350–377 (LNQEQKTAAKAVNEQNAQGSKEPDYLDI) are disordered.

It belongs to the FtsZ family. As to quaternary structure, homodimer. Polymerizes to form a dynamic ring structure in a strictly GTP-dependent manner. Interacts directly with several other division proteins.

It is found in the cytoplasm. In terms of biological role, essential cell division protein that forms a contractile ring structure (Z ring) at the future cell division site. The regulation of the ring assembly controls the timing and the location of cell division. One of the functions of the FtsZ ring is to recruit other cell division proteins to the septum to produce a new cell wall between the dividing cells. Binds GTP and shows GTPase activity. The sequence is that of Cell division protein FtsZ from Sodalis glossinidius.